The primary structure comprises 290 residues: 4-hydroxy-3-methylbut-2-enyl diphosphate reductase (290 aa).

Residue Cys-12 coordinates [4Fe-4S] cluster. (2E)-4-hydroxy-3-methylbut-2-enyl diphosphate-binding residues include His-50 and His-83. Positions 50 and 83 each coordinate dimethylallyl diphosphate. Residues His-50 and His-83 each contribute to the isopentenyl diphosphate site. Position 105 (Cys-105) interacts with [4Fe-4S] cluster. Residue His-133 participates in (2E)-4-hydroxy-3-methylbut-2-enyl diphosphate binding. His-133 is a dimethylallyl diphosphate binding site. An isopentenyl diphosphate-binding site is contributed by His-133. The Proton donor role is filled by Glu-135. Residue Thr-173 participates in (2E)-4-hydroxy-3-methylbut-2-enyl diphosphate binding. Cys-202 contributes to the [4Fe-4S] cluster binding site. The (2E)-4-hydroxy-3-methylbut-2-enyl diphosphate site is built by Ser-230, Asn-232, and Ser-274. Dimethylallyl diphosphate-binding residues include Ser-230, Asn-232, and Ser-274. Residues Ser-230, Asn-232, and Ser-274 each contribute to the isopentenyl diphosphate site.

It belongs to the IspH family. The cofactor is [4Fe-4S] cluster.

It catalyses the reaction isopentenyl diphosphate + 2 oxidized [2Fe-2S]-[ferredoxin] + H2O = (2E)-4-hydroxy-3-methylbut-2-enyl diphosphate + 2 reduced [2Fe-2S]-[ferredoxin] + 2 H(+). The catalysed reaction is dimethylallyl diphosphate + 2 oxidized [2Fe-2S]-[ferredoxin] + H2O = (2E)-4-hydroxy-3-methylbut-2-enyl diphosphate + 2 reduced [2Fe-2S]-[ferredoxin] + 2 H(+). It participates in isoprenoid biosynthesis; dimethylallyl diphosphate biosynthesis; dimethylallyl diphosphate from (2E)-4-hydroxy-3-methylbutenyl diphosphate: step 1/1. Its pathway is isoprenoid biosynthesis; isopentenyl diphosphate biosynthesis via DXP pathway; isopentenyl diphosphate from 1-deoxy-D-xylulose 5-phosphate: step 6/6. In terms of biological role, catalyzes the conversion of 1-hydroxy-2-methyl-2-(E)-butenyl 4-diphosphate (HMBPP) into a mixture of isopentenyl diphosphate (IPP) and dimethylallyl diphosphate (DMAPP). Acts in the terminal step of the DOXP/MEP pathway for isoprenoid precursor biosynthesis. The chain is 4-hydroxy-3-methylbut-2-enyl diphosphate reductase from Nitratidesulfovibrio vulgaris (strain ATCC 29579 / DSM 644 / CCUG 34227 / NCIMB 8303 / VKM B-1760 / Hildenborough) (Desulfovibrio vulgaris).